The sequence spans 715 residues: Fatty acid oxidation complex subunit alpha (715 aa).

The interval 1–190 (MTTTSAFMLN…KAGLVDDVVP (190 aa)) is enoyl-CoA hydratase. The interval 306–715 (GPLNSVGILG…WTNGETDQGN (410 aa)) is 3-hydroxyacyl-CoA dehydrogenase.

This sequence in the N-terminal section; belongs to the enoyl-CoA hydratase/isomerase family. It in the central section; belongs to the 3-hydroxyacyl-CoA dehydrogenase family. Heterotetramer of two alpha chains (FadJ) and two beta chains (FadI).

The protein resides in the cytoplasm. The catalysed reaction is a (3S)-3-hydroxyacyl-CoA = a (2E)-enoyl-CoA + H2O. It carries out the reaction a 4-saturated-(3S)-3-hydroxyacyl-CoA = a (3E)-enoyl-CoA + H2O. The enzyme catalyses a (3S)-3-hydroxyacyl-CoA + NAD(+) = a 3-oxoacyl-CoA + NADH + H(+). It catalyses the reaction (3S)-3-hydroxybutanoyl-CoA = (3R)-3-hydroxybutanoyl-CoA. It participates in lipid metabolism; fatty acid beta-oxidation. Its function is as follows. Catalyzes the formation of a hydroxyacyl-CoA by addition of water on enoyl-CoA. Also exhibits 3-hydroxyacyl-CoA epimerase and 3-hydroxyacyl-CoA dehydrogenase activities. The protein is Fatty acid oxidation complex subunit alpha of Salmonella dublin (strain CT_02021853).